The following is a 423-amino-acid chain: Serine/threonine-protein kinase ppk25 (423 aa).

Phosphoserine is present on residues S36 and S38. Positions W53–L305 constitute a Protein kinase domain. ATP-binding positions include I59 to V67 and K82. Residue D175 is the Proton acceptor of the active site.

Belongs to the protein kinase superfamily. Ser/Thr protein kinase family.

It is found in the cytoplasm. The catalysed reaction is L-seryl-[protein] + ATP = O-phospho-L-seryl-[protein] + ADP + H(+). It carries out the reaction L-threonyl-[protein] + ATP = O-phospho-L-threonyl-[protein] + ADP + H(+). The chain is Serine/threonine-protein kinase ppk25 (ppk25) from Schizosaccharomyces pombe (strain 972 / ATCC 24843) (Fission yeast).